A 338-amino-acid chain; its full sequence is Lipoate-protein ligase A (338 aa).

A BPL/LPL catalytic domain is found at 29-216 (PATQRVLFLW…AFFSHYGERV (188 aa)). ATP contacts are provided by residues Arg71, 76-79 (GAVF), and Lys134. Lys134 provides a ligand contact to (R)-lipoate.

This sequence belongs to the LplA family. In terms of assembly, monomer.

It localises to the cytoplasm. The catalysed reaction is L-lysyl-[lipoyl-carrier protein] + (R)-lipoate + ATP = N(6)-[(R)-lipoyl]-L-lysyl-[lipoyl-carrier protein] + AMP + diphosphate + H(+). Its pathway is protein modification; protein lipoylation via exogenous pathway; protein N(6)-(lipoyl)lysine from lipoate: step 1/2. It participates in protein modification; protein lipoylation via exogenous pathway; protein N(6)-(lipoyl)lysine from lipoate: step 2/2. Its function is as follows. Catalyzes both the ATP-dependent activation of exogenously supplied lipoate to lipoyl-AMP and the transfer of the activated lipoyl onto the lipoyl domains of lipoate-dependent enzymes. This Klebsiella pneumoniae (strain 342) protein is Lipoate-protein ligase A.